A 159-amino-acid chain; its full sequence is Transcription elongation factor GreA (159 aa).

Residues 1 to 76 (MAEEKEVVLT…SLEKTLKKAR (76 aa)) are a coiled coil.

Belongs to the GreA/GreB family.

Functionally, necessary for efficient RNA polymerase transcription elongation past template-encoded arresting sites. The arresting sites in DNA have the property of trapping a certain fraction of elongating RNA polymerases that pass through, resulting in locked ternary complexes. Cleavage of the nascent transcript by cleavage factors such as GreA or GreB allows the resumption of elongation from the new 3'terminus. GreA releases sequences of 2 to 3 nucleotides. This Syntrophomonas wolfei subsp. wolfei (strain DSM 2245B / Goettingen) protein is Transcription elongation factor GreA.